Here is an 807-residue protein sequence, read N- to C-terminus: Leucine--tRNA ligase (807 aa).

The 'HIGH' region signature appears at 40–51 (PYPSGQGLHVGH). A 'KMSKS' region motif is present at residues 575–579 (KMSKS). Lys-578 is an ATP binding site.

The protein belongs to the class-I aminoacyl-tRNA synthetase family.

It is found in the cytoplasm. It carries out the reaction tRNA(Leu) + L-leucine + ATP = L-leucyl-tRNA(Leu) + AMP + diphosphate. The chain is Leucine--tRNA ligase from Latilactobacillus sakei subsp. sakei (strain 23K) (Lactobacillus sakei subsp. sakei).